We begin with the raw amino-acid sequence, 455 residues long: MNNAGLNSEKVSALIQKLNSDPQFVLAQNVGTTHDLLDICLRRATVQGAQHVFQHVVPQEGKPVTNQKSSGRCWIFSCLNVMRLPFMKKFNIEEFEFSQSYLFFWDKVERCYFFLNAFVDTAQKKEPEDGRLVQYLLMNPTNDGGQWDMLVNIVEKYGVVPKKCFPESHTTEATRRMNDILNHKMREFCIRLRNLVHSGATKGEISSTQDAMMEEIFRVVCICLGNPPETFTWEYRDKDKNYHKIGPITPLQFYKEHVKPLFNMEDKICFVNDPRPQHKYNKLYTVDYLSNMVGGRKTLYNNQPIDFLKKMVAASIKDGEAVWFGCDVGKHFNGKLGLSDMNVYDHELVFGVSLKNMNKAERLAFGESLMTHAMTFTAVSEKDNQEGTFVKWRVENSWGEDHGHKGYLCMTDEWFSEYVYEVVVDKKHVPEEVLAVLEQEPIVLPAWDPMGALAE.

Methionine 1 is modified (N-acetylmethionine). Residues cysteine 73 and histidine 372 contribute to the active site. Position 391 is an N6-acetyllysine (lysine 391). Asparagine 396 is an active-site residue.

Belongs to the peptidase C1 family. Homohexamer. Interacts with NUDT12 (via ANK repeats).

Its subcellular location is the cytoplasm. The protein localises to the cytoplasmic granule. The catalysed reaction is Inactivates bleomycin B2 (a cytotoxic glycometallopeptide) by hydrolysis of a carboxyamide bond of beta-aminoalanine, but also shows general aminopeptidase activity. The specificity varies somewhat with source, but amino acid arylamides of Met, Leu and Ala are preferred.. Its function is as follows. The normal physiological role of BLM hydrolase is unknown, but it catalyzes the inactivation of the antitumor drug BLM (a glycopeptide) by hydrolyzing the carboxamide bond of its B-aminoalaninamide moiety thus protecting normal and malignant cells from BLM toxicity. The polypeptide is Bleomycin hydrolase (Blmh) (Mus musculus (Mouse)).